We begin with the raw amino-acid sequence, 273 residues long: Tyrosinase (273 aa).

An N-terminal signal peptide occupies residues Met1–Gly18. Residues Asn86, Asn111, and Asn161 are each glycosylated (N-linked (GlcNAc...) asparagine). Positions 180, 202, and 211 each coordinate Cu cation. N-linked (GlcNAc...) asparagine glycosylation occurs at Asn230.

This sequence belongs to the tyrosinase family. Cu(2+) serves as cofactor.

Its subcellular location is the melanosome membrane. It is found in the melanosome. The enzyme catalyses 2 L-dopa + O2 = 2 L-dopaquinone + 2 H2O. It carries out the reaction L-tyrosine + O2 = L-dopaquinone + H2O. This is a copper-containing oxidase that functions in the formation of pigments such as melanins and other polyphenolic compounds. Catalyzes the initial and rate limiting step in the cascade of reactions leading to melanin production from tyrosine. In addition to hydroxylating tyrosine to DOPA (3,4-dihydroxyphenylalanine), also catalyzes the oxidation of DOPA to DOPA-quinone, and possibly the oxidation of DHI (5,6-dihydroxyindole) to indole-5,6 quinone. This Coturnix japonica (Japanese quail) protein is Tyrosinase (TYR).